The following is a 57-amino-acid chain: Cytochrome b-c1 complex subunit 10, mitochondrial (57 aa).

Over 1–23 (MAGTSGLLNAVKPKIQTIDIQAA) the chain is Mitochondrial matrix. The helical transmembrane segment at 24 to 44 (AGWGIAAAAGAIWVVQPFGWI) threads the bilayer. Topologically, residues 45-57 (KKTFIDPPPTEEK) are mitochondrial intermembrane.

This sequence belongs to the UQCR11/QCR10 family. In terms of assembly, component of the ubiquinol-cytochrome c oxidoreductase (cytochrome b-c1 complex, complex III, CIII), a multisubunit enzyme composed of 10 subunits. The complex is composed of 3 respiratory subunits cytochrome b (MT-CYB), cytochrome c1 (CYC1-1 or CYC1-2) and Rieske protein (UCR1-1 or UCR1-2), 2 core protein subunits MPPalpha1 (or MPPalpha2) and MPPB, and 5 low-molecular weight protein subunits QCR7-1 (or QCR7-2), UCRQ-1 (or UCRQ-2), QCR9, UCRY and probably QCR6-1 (or QCR6-2). The complex exists as an obligatory dimer and forms supercomplexes (SCs) in the inner mitochondrial membrane with NADH-ubiquinone oxidoreductase (complex I, CI), resulting in different assemblies (supercomplexes SCI(1)III(2) and SCI(2)III(4)).

It localises to the mitochondrion inner membrane. Component of the ubiquinol-cytochrome c oxidoreductase, a multisubunit transmembrane complex that is part of the mitochondrial electron transport chain which drives oxidative phosphorylation. The respiratory chain contains 3 multisubunit complexes succinate dehydrogenase (complex II, CII), ubiquinol-cytochrome c oxidoreductase (cytochrome b-c1 complex, complex III, CIII) and cytochrome c oxidase (complex IV, CIV), that cooperate to transfer electrons derived from NADH and succinate to molecular oxygen, creating an electrochemical gradient over the inner membrane that drives transmembrane transport and the ATP synthase. The cytochrome b-c1 complex catalyzes electron transfer from ubiquinol to cytochrome c, linking this redox reaction to translocation of protons across the mitochondrial inner membrane, with protons being carried across the membrane as hydrogens on the quinol. In the process called Q cycle, 2 protons are consumed from the matrix, 4 protons are released into the intermembrane space and 2 electrons are passed to cytochrome c. In Arabidopsis thaliana (Mouse-ear cress), this protein is Cytochrome b-c1 complex subunit 10, mitochondrial (UCRY).